Reading from the N-terminus, the 101-residue chain is Small ribosomal subunit protein uS14 (101 aa).

The protein belongs to the universal ribosomal protein uS14 family. In terms of assembly, part of the 30S ribosomal subunit. Contacts proteins S3 and S10.

In terms of biological role, binds 16S rRNA, required for the assembly of 30S particles and may also be responsible for determining the conformation of the 16S rRNA at the A site. The polypeptide is Small ribosomal subunit protein uS14 (Methylorubrum populi (strain ATCC BAA-705 / NCIMB 13946 / BJ001) (Methylobacterium populi)).